Here is a 35-residue protein sequence, read N- to C-terminus: Kappa-theraphotoxin-Tb1a (35 aa).

Disulfide bonds link cysteine 3–cysteine 18, cysteine 10–cysteine 23, and cysteine 17–cysteine 30.

The protein belongs to the neurotoxin 10 (Hwtx-1) family. 59 (Tltx) subfamily. As to quaternary structure, monomer. As to expression, expressed by the venom gland.

The protein resides in the secreted. Its function is as follows. Blocks Kv4.2/KCND2 voltage-gated potassium channels (IC(50) is 193.0 nM) by shifting the voltage-dependence of channel activation to more depolarized potentials. The toxin is thought to bind to the S3-S4 linker region of the voltage sensor domain. The sequence is that of Kappa-theraphotoxin-Tb1a from Theraphosa blondi (Goliath birdeating spider).